The chain runs to 349 residues: Palmitoyltransferase PFA5 (349 aa).

The next 2 membrane-spanning stretches (helical) occupy residues 19-39 and 57-77; these read LIPF…CHQF and LIIV…LMLV. A DHHC domain is found at 126-176; the sequence is IWCSNCQSLKMSRTHHSTKVGYCVPRFDHYCVWIGTVLGRLNYKLFVQFTF. The active-site S-palmitoyl cysteine intermediate is Cys156. Transmembrane regions (helical) follow at residues 170–190 and 204–224; these read LFVQ…ISIA and VYAV…LFLT.

This sequence belongs to the DHHC palmitoyltransferase family. PFA5 subfamily.

It localises to the membrane. It carries out the reaction L-cysteinyl-[protein] + hexadecanoyl-CoA = S-hexadecanoyl-L-cysteinyl-[protein] + CoA. This Kluyveromyces lactis (strain ATCC 8585 / CBS 2359 / DSM 70799 / NBRC 1267 / NRRL Y-1140 / WM37) (Yeast) protein is Palmitoyltransferase PFA5 (PFA5).